A 661-amino-acid polypeptide reads, in one-letter code: MDSLKSGLATAGKFTYKGTKTVAKAGYNTSKKHMHKKDKDTHHTDHHEEDEYSEDYHTPRSVNTLRDPSSFPPPPTRSGQAGHVAGNTAGSIAGNYSGYSQPTAAANNTISYNAQAQNTPYSSPAQQQPVSPQPPVQNSQYNPTQNYAIQQPQQPAGTNANYSYGNQQHPAGQAPIVNSITPNHQYNANNTFQSNLPNQQLNVAAPTQSTNNNFNQMAANNTYTNSAQVAYNSQQQQLQQNSQQNTYSNAPYQVQAQAAYNPLPQQQQQQQQQPEYNTQLQQNQQLHNQQAYGQQQQIYSNNTQPQYVSQTQQTSYTQNAPPQQTRSPEQPVYGQGITPPVQANAYRPMPSIPPDVNQTAITSTNSANEALQNRIPMNNVDLSSLPPPPTHRDRGRASVENETIDENMQTNNSTIDSSSVASADINNNSIRNIPAPAVGPPGAATRAVPPPPPRRTTSQSMSTNSVVETSPGINSIEQINNYYDGTYAGHSANERPPITNTLKRGTPPLPRRSTSTKMNTQPNPQTPISPSRDTNMDLQRRSTVSSIQSSNRPMPDPPIRKDNIQENNIESKQVNQEVNSQMSVSNIGIGDITSELQHIKLKSVGNSYEREIHGEAATEVVHNKPLKKKPPTVPKKKDSLKGKAPPPVPKKKPTLTSFVHS.

Disordered stretches follow at residues 19–99 (TKTV…YSGY), 116–142 (AQNTPYSSPAQQQPVSPQPPVQNSQYN), 154–194 (QPAG…TFQS), 263–419 (LPQQ…DSSS), 431–473 (RNIP…SPGI), 487–563 (YAGH…RKDN), and 615–661 (EAAT…FVHS). The segment covering 37–58 (KDKDTHHTDHHEEDEYSEDYHT) has biased composition (basic and acidic residues). A compositionally biased stretch (low complexity) spans 120–142 (PYSSPAQQQPVSPQPPVQNSQYN). Low complexity predominate over residues 263–318 (LPQQQQQQQQQPEYNTQLQQNQQLHNQQAYGQQQQIYSNNTQPQYVSQTQQTSYTQ). Polar residues-rich tracts occupy residues 319-328 (NAPPQQTRSP) and 356-371 (VNQTAITSTNSANEAL). Residues 390 to 399 (THRDRGRASV) are compositionally biased toward basic and acidic residues. Over residues 406 to 419 (ENMQTNNSTIDSSS) the composition is skewed to polar residues. Low complexity predominate over residues 434–447 (PAPAVGPPGAATRA). Composition is skewed to polar residues over residues 458-473 (SQSMSTNSVVETSPGI), 512-533 (RSTSTKMNTQPNPQTPISPSRD), and 541-552 (RSTVSSIQSSNR).

The protein belongs to the AIM3 family.

It is found in the membrane raft. In Candida glabrata (strain ATCC 2001 / BCRC 20586 / JCM 3761 / NBRC 0622 / NRRL Y-65 / CBS 138) (Yeast), this protein is Altered inheritance of mitochondria protein 3-1 (AIM3-1).